The primary structure comprises 76 residues: Putative membrane protein insertion efficiency factor (76 aa).

This sequence belongs to the UPF0161 family.

The protein resides in the cell inner membrane. Its function is as follows. Could be involved in insertion of integral membrane proteins into the membrane. The protein is Putative membrane protein insertion efficiency factor of Paraburkholderia phymatum (strain DSM 17167 / CIP 108236 / LMG 21445 / STM815) (Burkholderia phymatum).